Consider the following 59-residue polypeptide: Large ribosomal subunit protein uL30 (59 aa).

Belongs to the universal ribosomal protein uL30 family. As to quaternary structure, part of the 50S ribosomal subunit.

The protein is Large ribosomal subunit protein uL30 of Citrobacter koseri (strain ATCC BAA-895 / CDC 4225-83 / SGSC4696).